We begin with the raw amino-acid sequence, 123 residues long: uncharacterized protein (123 aa).

This is an uncharacterized protein from Escherichia coli O157:H7.